The sequence spans 307 residues: Glycerol-3-phosphate dehydrogenase [NAD(P)+] (307 aa).

The NADPH site is built by W14, R34, R35, and K82. K82 and G110 together coordinate sn-glycerol 3-phosphate. S114 lines the NADPH pocket. Sn-glycerol 3-phosphate is bound by residues K165, D218, S228, R229, and N230. The active-site Proton acceptor is the K165. An NADPH-binding site is contributed by R229. Residue E255 coordinates NADPH.

Belongs to the NAD-dependent glycerol-3-phosphate dehydrogenase family.

The protein localises to the cytoplasm. The enzyme catalyses sn-glycerol 3-phosphate + NAD(+) = dihydroxyacetone phosphate + NADH + H(+). It carries out the reaction sn-glycerol 3-phosphate + NADP(+) = dihydroxyacetone phosphate + NADPH + H(+). Its pathway is membrane lipid metabolism; glycerophospholipid metabolism. Functionally, catalyzes the reduction of the glycolytic intermediate dihydroxyacetone phosphate (DHAP) to sn-glycerol 3-phosphate (G3P), the key precursor for phospholipid synthesis. The sequence is that of Glycerol-3-phosphate dehydrogenase [NAD(P)+] from Nostoc sp. (strain PCC 7120 / SAG 25.82 / UTEX 2576).